The chain runs to 337 residues: Protein LEG1 homolog (337 aa).

A signal peptide spans 1 to 20; the sequence is MAVLASWVWVLAGCFCAAVA. A glycan (N-linked (GlcNAc...) asparagine) is linked at N171.

This sequence belongs to the LEG1 family.

The protein resides in the secreted. Functionally, may be involved in early liver development. In Mus musculus (Mouse), this protein is Protein LEG1 homolog.